A 1131-amino-acid polypeptide reads, in one-letter code: Major DNA-binding protein (1131 aa).

The Required for filament formation signature appears at 790-791 (FW). The segment at 1112 to 1131 (LKCEETEHENEEPSLKKARL) is required for nuclear localization.

It belongs to the herpesviridae major DNA-binding protein family. In terms of assembly, homooligomers. Forms double-helical filaments necessary for the formation of replication compartments within the host nucleus. Interacts with the origin-binding protein. Interacts with the helicase primase complex; this interaction stimulates primer synthesis activity of the helicase-primase complex. Interacts with the DNA polymerase. Interacts with the alkaline exonuclease; this interaction increases its nuclease processivity.

It localises to the host nucleus. Its function is as follows. Single-stranded DNA-binding protein required for DNA replication. In terms of biological role, plays several crucial roles in viral infection. Participates in the opening of the viral DNA origin to initiate replication by interacting with the origin-binding protein. May disrupt loops, hairpins and other secondary structures present on ssDNA to reduce and eliminate pausing of viral DNA polymerase at specific sites during elongation. Promotes viral DNA recombination by performing strand-transfer, characterized by the ability to transfer a DNA strand from a linear duplex to a complementary single-stranded DNA circle. Can also catalyze the renaturation of complementary single strands. Additionally, reorganizes the host cell nucleus, leading to the formation of prereplicative sites and replication compartments. This process is driven by the protein which can form double-helical filaments in the absence of DNA. This is Major DNA-binding protein from Human herpesvirus 7 (strain JI) (HHV-7).